A 447-amino-acid chain; its full sequence is ATP-dependent protease ATPase subunit HslU (447 aa).

ATP contacts are provided by residues isoleucine 17, 59–64 (GVGKTE), aspartate 256, glutamate 321, and arginine 393.

The protein belongs to the ClpX chaperone family. HslU subfamily. In terms of assembly, a double ring-shaped homohexamer of HslV is capped on each side by a ring-shaped HslU homohexamer. The assembly of the HslU/HslV complex is dependent on binding of ATP.

It localises to the cytoplasm. Its function is as follows. ATPase subunit of a proteasome-like degradation complex; this subunit has chaperone activity. The binding of ATP and its subsequent hydrolysis by HslU are essential for unfolding of protein substrates subsequently hydrolyzed by HslV. HslU recognizes the N-terminal part of its protein substrates and unfolds these before they are guided to HslV for hydrolysis. In Pseudomonas putida (strain ATCC 47054 / DSM 6125 / CFBP 8728 / NCIMB 11950 / KT2440), this protein is ATP-dependent protease ATPase subunit HslU.